Here is a 349-residue protein sequence, read N- to C-terminus: 4-hydroxy-3-methylbut-2-enyl diphosphate reductase (349 aa).

Cys-18 is a binding site for [4Fe-4S] cluster. 2 residues coordinate (2E)-4-hydroxy-3-methylbut-2-enyl diphosphate: His-47 and His-83. His-47 and His-83 together coordinate dimethylallyl diphosphate. Isopentenyl diphosphate is bound by residues His-47 and His-83. Cys-105 lines the [4Fe-4S] cluster pocket. A (2E)-4-hydroxy-3-methylbut-2-enyl diphosphate-binding site is contributed by His-133. His-133 is a binding site for dimethylallyl diphosphate. His-133 is a binding site for isopentenyl diphosphate. The active-site Proton donor is the Glu-135. Position 174 (Thr-174) interacts with (2E)-4-hydroxy-3-methylbut-2-enyl diphosphate. Cys-204 provides a ligand contact to [4Fe-4S] cluster. Residues Ser-232, Ser-233, Asn-234, and Ser-277 each coordinate (2E)-4-hydroxy-3-methylbut-2-enyl diphosphate. Dimethylallyl diphosphate contacts are provided by Ser-232, Ser-233, Asn-234, and Ser-277. Isopentenyl diphosphate contacts are provided by Ser-232, Ser-233, Asn-234, and Ser-277.

This sequence belongs to the IspH family. It depends on [4Fe-4S] cluster as a cofactor.

The enzyme catalyses isopentenyl diphosphate + 2 oxidized [2Fe-2S]-[ferredoxin] + H2O = (2E)-4-hydroxy-3-methylbut-2-enyl diphosphate + 2 reduced [2Fe-2S]-[ferredoxin] + 2 H(+). It carries out the reaction dimethylallyl diphosphate + 2 oxidized [2Fe-2S]-[ferredoxin] + H2O = (2E)-4-hydroxy-3-methylbut-2-enyl diphosphate + 2 reduced [2Fe-2S]-[ferredoxin] + 2 H(+). Its pathway is isoprenoid biosynthesis; dimethylallyl diphosphate biosynthesis; dimethylallyl diphosphate from (2E)-4-hydroxy-3-methylbutenyl diphosphate: step 1/1. The protein operates within isoprenoid biosynthesis; isopentenyl diphosphate biosynthesis via DXP pathway; isopentenyl diphosphate from 1-deoxy-D-xylulose 5-phosphate: step 6/6. Catalyzes the conversion of 1-hydroxy-2-methyl-2-(E)-butenyl 4-diphosphate (HMBPP) into a mixture of isopentenyl diphosphate (IPP) and dimethylallyl diphosphate (DMAPP). Acts in the terminal step of the DOXP/MEP pathway for isoprenoid precursor biosynthesis. This Bartonella bacilliformis (strain ATCC 35685 / KC583 / Herrer 020/F12,63) protein is 4-hydroxy-3-methylbut-2-enyl diphosphate reductase.